The chain runs to 540 residues: Chaperonin GroEL (540 aa).

Residues 30 to 33, Lys51, 87 to 91, Gly415, and Asp495 each bind ATP; these read TLGP and DGTTT.

Belongs to the chaperonin (HSP60) family. In terms of assembly, forms a cylinder of 14 subunits composed of two heptameric rings stacked back-to-back. Interacts with the co-chaperonin GroES.

The protein localises to the cytoplasm. The enzyme catalyses ATP + H2O + a folded polypeptide = ADP + phosphate + an unfolded polypeptide.. Together with its co-chaperonin GroES, plays an essential role in assisting protein folding. The GroEL-GroES system forms a nano-cage that allows encapsulation of the non-native substrate proteins and provides a physical environment optimized to promote and accelerate protein folding. The protein is Chaperonin GroEL of Serratia ficaria.